A 384-amino-acid polypeptide reads, in one-letter code: S-adenosylmethionine synthase (384 aa).

H15 provides a ligand contact to ATP. D17 serves as a coordination point for Mg(2+). E43 lines the K(+) pocket. The L-methionine site is built by E56 and Q99. The tract at residues 99 to 109 (QSPDINQGVDR) is flexible loop. Residues 164-166 (DAK), 230-231 (RF), D239, 245-246 (RK), A262, and K266 each bind ATP. D239 contacts L-methionine. L-methionine is bound at residue K270.

This sequence belongs to the AdoMet synthase family. In terms of assembly, homotetramer; dimer of dimers. Requires Mg(2+) as cofactor. K(+) is required as a cofactor.

The protein resides in the cytoplasm. It carries out the reaction L-methionine + ATP + H2O = S-adenosyl-L-methionine + phosphate + diphosphate. It functions in the pathway amino-acid biosynthesis; S-adenosyl-L-methionine biosynthesis; S-adenosyl-L-methionine from L-methionine: step 1/1. In terms of biological role, catalyzes the formation of S-adenosylmethionine (AdoMet) from methionine and ATP. The overall synthetic reaction is composed of two sequential steps, AdoMet formation and the subsequent tripolyphosphate hydrolysis which occurs prior to release of AdoMet from the enzyme. The polypeptide is S-adenosylmethionine synthase (Erwinia tasmaniensis (strain DSM 17950 / CFBP 7177 / CIP 109463 / NCPPB 4357 / Et1/99)).